The following is a 759-amino-acid chain: Secretin XpsD (759 aa).

Positions 1-21 (MSERMTPRLFPVSLLIGLLAG) are cleaved as a signal peptide. A lipid anchor (N-palmitoyl cysteine) is attached at C22. C22 carries S-diacylglycerol cysteine lipidation. Residues 40 to 51 (VGAAGATQTTAE) are compositionally biased toward low complexity. The segment at 40–69 (VGAAGATQTTAEQRADGNASAKPTPVIRRG) is disordered. The segment at 92–187 (GSATFNFEGE…APSTASPSAA (96 aa)) is N0. The N1 stretch occupies residues 189–253 (GFEVRVVPLK…VQIFDVDWLS (65 aa)). The interval 254–323 (GMSVGVFPIQ…IQQWLDRIDS (70 aa)) is N2. The tract at residues 326-474 (GGVRLFSYEL…SIRDVIEKLD (149 aa)) is N3. Residues 352–434 (GGRGNGGNSG…PPSTNQNGSV (83 aa)) form a disordered region. The span at 392-401 (ATGGDIGGTS) shows a compositional bias: gly residues. Over residues 425 to 434 (PPSTNQNGSV) the composition is skewed to polar residues. The tract at residues 479-734 (QVHIEAQIAE…VLITPSIVRN (256 aa)) is secretin. A s domain region spans residues 736–759 (QDARDLTDEYGSKFKSMRPMDVHK).

It belongs to the bacterial secretin family. GSP D subfamily. As to quaternary structure, forms a cylindrical channel with 15 subunits. Binds to XpsN.

Its subcellular location is the cell outer membrane. In terms of biological role, involved in a type II secretion system (T2SS, formerly general secretion pathway, GSP) for the export of proteins. This subunit forms the outer membrane channel. The polypeptide is Secretin XpsD (xpsD) (Xanthomonas campestris pv. campestris (strain ATCC 33913 / DSM 3586 / NCPPB 528 / LMG 568 / P 25)).